The following is a 1192-amino-acid chain: Outer capsid protein VP2 (1192 aa).

The tract at residues I1112–R1192 is disordered. Positions P1140–T1150 are enriched in low complexity. Residues N1159 to Q1183 show a composition bias toward polar residues.

It is found in the virion. The enzyme catalyses a 5'-end diphospho-ribonucleoside in mRNA + GTP + H(+) = a 5'-end (5'-triphosphoguanosine)-ribonucleoside in mRNA + diphosphate. It catalyses the reaction a 5'-end (5'-triphosphoguanosine)-ribonucleoside in mRNA + S-adenosyl-L-methionine = a 5'-end (N(7)-methyl 5'-triphosphoguanosine)-ribonucleoside in mRNA + S-adenosyl-L-homocysteine. Functionally, outer capsid protein involved in mRNA capping. Catalyzes the last 3 enzymatic activities for formation of the 5' cap structure on the viral plus-strand transcripts, namely the RNA guanylyltransferase, RNA-7N- and RNA-2'O-methyltransferase activities. The chain is Outer capsid protein VP2 (S2) from Rice ragged stunt virus (isolate Thailand) (RRSV).